The sequence spans 337 residues: Ribonucleoside-diphosphate reductase small subunit (337 aa).

The interval 1 to 22 (MDPAVSPASTDPLDTHASGAGA) is disordered. Fe cation is bound by residues D91, E121, and H124. Residue Y128 is part of the active site. The helical transmembrane segment at 177-197 (FILMILIEGVFFAASFAAIAY) threads the bilayer. 3 residues coordinate Fe cation: E184, E218, and H221.

This sequence belongs to the ribonucleoside diphosphate reductase small chain family. Heterotetramer composed of a homodimer of the large subunit (R1) and a homodimer of the small subunit (R2). Larger multisubunit protein complex are also active, composed of (R1)n(R2)n. Fe cation serves as cofactor.

Its subcellular location is the host membrane. The catalysed reaction is a 2'-deoxyribonucleoside 5'-diphosphate + [thioredoxin]-disulfide + H2O = a ribonucleoside 5'-diphosphate + [thioredoxin]-dithiol. In terms of biological role, ribonucleoside-diphosphate reductase holoenzyme provides the precursors necessary for viral DNA synthesis. Allows virus growth in non-dividing cells, as well as reactivation from latency in infected hosts. Catalyzes the biosynthesis of deoxyribonucleotides from the corresponding ribonucleotides. This Human herpesvirus 2 (strain 333) (HHV-2) protein is Ribonucleoside-diphosphate reductase small subunit.